A 448-amino-acid polypeptide reads, in one-letter code: Cysteine--tRNA ligase (448 aa).

C27 contributes to the Zn(2+) binding site. The short motif at 29-39 is the 'HIGH' region element; sequence PTVYNYIHVGN. C210, H235, and E239 together coordinate Zn(2+). The 'KMSKS' region signature appears at 267–271; sequence KMSKS. K270 is a binding site for ATP.

This sequence belongs to the class-I aminoacyl-tRNA synthetase family. In terms of assembly, monomer. Requires Zn(2+) as cofactor.

The protein resides in the cytoplasm. It carries out the reaction tRNA(Cys) + L-cysteine + ATP = L-cysteinyl-tRNA(Cys) + AMP + diphosphate. The polypeptide is Cysteine--tRNA ligase (Lactococcus lactis subsp. lactis (strain IL1403) (Streptococcus lactis)).